The following is a 465-amino-acid chain: UDP-N-acetylmuramate--L-alanine ligase (465 aa).

114–120 (GAHGKTT) contacts ATP.

The protein belongs to the MurCDEF family.

Its subcellular location is the cytoplasm. The enzyme catalyses UDP-N-acetyl-alpha-D-muramate + L-alanine + ATP = UDP-N-acetyl-alpha-D-muramoyl-L-alanine + ADP + phosphate + H(+). It participates in cell wall biogenesis; peptidoglycan biosynthesis. Cell wall formation. The chain is UDP-N-acetylmuramate--L-alanine ligase from Syntrophomonas wolfei subsp. wolfei (strain DSM 2245B / Goettingen).